We begin with the raw amino-acid sequence, 239 residues long: Tryptophan synthase alpha chain (239 aa).

Active-site proton acceptor residues include Glu-34 and Asp-45.

Belongs to the TrpA family. In terms of assembly, tetramer of two alpha and two beta chains.

It catalyses the reaction (1S,2R)-1-C-(indol-3-yl)glycerol 3-phosphate + L-serine = D-glyceraldehyde 3-phosphate + L-tryptophan + H2O. It functions in the pathway amino-acid biosynthesis; L-tryptophan biosynthesis; L-tryptophan from chorismate: step 5/5. Functionally, the alpha subunit is responsible for the aldol cleavage of indoleglycerol phosphate to indole and glyceraldehyde 3-phosphate. In Thermotoga petrophila (strain ATCC BAA-488 / DSM 13995 / JCM 10881 / RKU-1), this protein is Tryptophan synthase alpha chain.